We begin with the raw amino-acid sequence, 1023 residues long: RTX-I toxin determinant A from serotypes 5/10 (1023 aa).

The next 3 membrane-spanning stretches (helical) occupy residues 226 to 256 (NNLPDLSLAGPGFDAVSGILSVVSASFILSN), 297 to 326 (STTAATGGLIGSVVALAISPLSFLNVADKF), and 367 to 406 (INSVLSAASAGVGAAATGSLVGAPVAALVSAITGIISGIL). Hemolysin-type calcium-binding repeat units follow at residues 730-747 (FGSRFTDIFHGAKGDDEI), 748-765 (YGNDGHDILYGDDGNDVI), 766-783 (HGGDGNDHLVGGNGNDRL), 784-801 (IGGKGNNFLNGGDGDDEL), 812-829 (LGGAGNDILYGSDGTNLF), and 830-847 (DGGVGNDKIYGGLGKDIY).

It belongs to the RTX prokaryotic toxin (TC 1.C.11) family. In terms of processing, palmitoylated by ApxIC. The toxin only becomes active when modified.

The protein localises to the secreted. The protein resides in the host cell membrane. Its function is as follows. One of the virulence factors of A.pleuropneumoniae, which has a strong hemolytic activity and is cytotoxic for alveolar macrophages and neutrophils. This is RTX-I toxin determinant A from serotypes 5/10 (apxIA) from Actinobacillus pleuropneumoniae (Haemophilus pleuropneumoniae).